Consider the following 456-residue polypeptide: RuvB-like 1 (456 aa).

A Glycyl lysine isopeptide (Lys-Gly) (interchain with G-Cter in SUMO2) cross-link involves residue lysine 2. 70-77 (GPPGTGKT) serves as a coordination point for ATP. Residue lysine 225 forms a Glycyl lysine isopeptide (Lys-Gly) (interchain with G-Cter in SUMO1); alternate linkage. Residue lysine 225 forms a Glycyl lysine isopeptide (Lys-Gly) (interchain with G-Cter in SUMO2); alternate linkage. Lysine 445 participates in a covalent cross-link: Glycyl lysine isopeptide (Lys-Gly) (interchain with G-Cter in SUMO2). Lysine 453 is subject to N6-acetyllysine.

This sequence belongs to the RuvB family. As to quaternary structure, forms homohexameric rings. Can form a dodecamer with RUVBL2 made of two stacked hexameric rings; however, even though RUVBL1 and RUVBL2 are present in equimolar ratio, the oligomeric status of each hexamer is not known. Oligomerization may regulate binding to nucleic acids and conversely, binding to nucleic acids may affect the dodecameric assembly. Interaction of the complex with DHX34 results in conformational changes of the N-terminus of the RUVBL2 subunits, resulting in loss of nucleotide binding ability and ATP hydrolysis of the complex. Interacts with the transcriptional activation domain of MYC. Component of the RNA polymerase II holoenzyme complex. May also act to bridge the LEF1/TCF1-CTNNB1 complex and TBP. Component of the NuA4 histone acetyltransferase complex which contains the catalytic subunit KAT5/TIP60 and the subunits EP400, TRRAP/PAF400, BRD8/SMAP, EPC1, DMAP1/DNMAP1, RUVBL1/TIP49, RUVBL2, ING3, actin, ACTL6A/BAF53A, MORF4L1/MRG15, MORF4L2/MRGX, MRGBP, YEATS4/GAS41, VPS72/YL1 and MEAF6. The NuA4 complex interacts with MYC and the adenovirus E1A protein. RUVBL1 interacts with EP400. Component of a NuA4-related complex which contains EP400, TRRAP/PAF400, SRCAP, BRD8/SMAP, EPC1, DMAP1/DNMAP1, RUVBL1/TIP49, RUVBL2, actin, ACTL6A/BAF53A, VPS72 and YEATS4/GAS41. Component of the BAF53 complex, at least composed of ACTL6A/BAF53A, RUVBL1/TIP49, SMARCA2/BRM, and TRRAP/PAF400. Component of some MLL1/MLL complex, at least composed of the core components KMT2A/MLL1, ASH2L, HCFC1/HCF1, WDR5 and RBBP5, as well as the facultative components BACC1, CHD8, E2F6, HSP70, INO80C, KANSL1, LAS1L, MAX, MCRS1, MGA, MYST1/MOF, PELP1, PHF20, PRP31, RING2, RUVB1/TIP49A, RUVB2/TIP49B, SENP3, TAF1, TAF4, TAF6, TAF7, TAF9 and TEX10. Associates with alpha and gamma tubulins, particularly during metaphase and early anaphase. Interacts with NPAT. Component of the chromatin-remodeling INO80 complex; specifically part of a complex module associated with the helicase ATP-binding and the helicase C-terminal domain of INO80. Interacts with IGHMBP2. Interacts with OFD1. Interacts with HINT1. Component of a complex with USP49 and PSMC5. Component of a SWR1-like complex. Component of the R2TP complex composed at least of RUVBL1, RUVBL2, RPAP3 and PIHD1. Component of the PAQosome complex which is responsible for the biogenesis of several protein complexes and which consists of R2TP complex members RUVBL1, RUVBL2, RPAP3 and PIH1D1, URI complex members PFDN2, PFDN6, PDRG1, UXT and URI1 as well as ASDURF, POLR2E and DNAAF10/WDR92. Interacts with PIH1D1. Interacts with ITFG1. Interacts with WAC; WAC positively regulates MTOR activity by promoting the assembly of the TTT complex composed of TELO2, TTI1 and TTI2 and the RUVBL complex composed of RUVBL1 and RUVBL2 into the TTT-RUVBL complex which leads to the dimerization of the mTORC1 complex and its subsequent activation. The RUVBL1/RUVBL2 complex interacts with ZNHIT1 (via HIT-type zinc finger), ZNHIT3 (via HIT-type zinc finger), ZNHIT6 (via HIT-type zinc finger) and DDX59/ZNHIT5 (via HIT-type zinc finger) in the presence of ADP. Interacts with NOPCHAP1; the interaction is direct and disrupted upon ATP binding. Interacts with SMG1. Interacts with NOP2, NOP56 and NUFIP1.

Its subcellular location is the nucleus matrix. The protein localises to the nucleus. The protein resides in the nucleoplasm. It localises to the cytoplasm. It is found in the membrane. Its subcellular location is the cytoskeleton. The protein localises to the microtubule organizing center. The protein resides in the centrosome. It localises to the dynein axonemal particle. It carries out the reaction ATP + H2O = ADP + phosphate + H(+). In terms of biological role, possesses single-stranded DNA-stimulated ATPase and ATP-dependent DNA helicase (3' to 5') activity; hexamerization is thought to be critical for ATP hydrolysis and adjacent subunits in the ring-like structure contribute to the ATPase activity. Component of the NuA4 histone acetyltransferase complex which is involved in transcriptional activation of select genes principally by acetylation of nucleosomal histones H4 and H2A. This modification may both alter nucleosome-DNA interactions and promote interaction of the modified histones with other proteins which positively regulate transcription. This complex may be required for the activation of transcriptional programs associated with oncogene and proto-oncogene mediated growth induction, tumor suppressor mediated growth arrest and replicative senescence, apoptosis, and DNA repair. The NuA4 complex ATPase and helicase activities seem to be, at least in part, contributed by the association of RUVBL1 and RUVBL2 with EP400. NuA4 may also play a direct role in DNA repair when recruited to sites of DNA damage. Component of a SWR1-like complex that specifically mediates the removal of histone H2A.Z/H2AZ1 from the nucleosome. Proposed core component of the chromatin remodeling INO80 complex which exhibits DNA- and nucleosome-activated ATPase activity and catalyzes ATP-dependent nucleosome sliding. Plays an essential role in oncogenic transformation by MYC and also modulates transcriptional activation by the LEF1/TCF1-CTNNB1 complex. Essential for cell proliferation. May be able to bind plasminogen at cell surface and enhance plasminogen activation. The sequence is that of RuvB-like 1 (Ruvbl1) from Mus musculus (Mouse).